A 99-amino-acid polypeptide reads, in one-letter code: MTMKMKMKMSVVCAVVVVALFLIDVGPVAEAVTCNPTELSSCVPAITGGSKPSSTCCSKLKVQEPCLCNYIKNPSLKQYVNSPGAKKVLSNCGVTYPNC.

An N-terminal signal peptide occupies residues 1-33 (MTMKMKMKMSVVCAVVVVALFLIDVGPVAEAVT). Disulfide bonds link Cys34–Cys68, Cys42–Cys56, Cys57–Cys92, and Cys66–Cys99.

This sequence belongs to the plant LTP family. As to expression, expressed in most tissues except nodules.

In terms of biological role, potential lipid transfer protein. The sequence is that of Probable non-specific lipid-transfer protein AKCS9 from Vigna unguiculata (Cowpea).